We begin with the raw amino-acid sequence, 330 residues long: MDPTTLVWGTESTTMNGNDQALPLLCGKETLILVVLILFIALVGLVGNAFVLWLLGFRMRRNAFSVYVLSLAGADFLFLCFPMINCLAYLINFFHSISINFPSFFTTVMTCAYLAGLSMLSAISTERCLSVLWPIWYRSRRPRHLSAVMCVLLWALSLLLSILEGKFCGFLFSDGDSGWCQTFDFITAAWLMFLFVVLCGSSLALLVRILCGSRGLPLTRLYLTILLTVLIFLLCGLPFGIQWFLILWIWKNSDVLFCHIHPVSVVLSSFNSSANPIIYFFVGSFRKQWRLRQPVLKLALQRALQDTAEVDHSEGCFSQGTLEMSGSSLV.

Over 1 to 33 (MDPTTLVWGTESTTMNGNDQALPLLCGKETLIL) the chain is Extracellular. A helical membrane pass occupies residues 34–54 (VVLILFIALVGLVGNAFVLWL). The Cytoplasmic segment spans residues 55-63 (LGFRMRRNA). The helical transmembrane segment at 64-84 (FSVYVLSLAGADFLFLCFPMI) threads the bilayer. Over 85-96 (NCLAYLINFFHS) the chain is Extracellular. A helical membrane pass occupies residues 97–117 (ISINFPSFFTTVMTCAYLAGL). At 118–144 (SMLSAISTERCLSVLWPIWYRSRRPRH) the chain is on the cytoplasmic side. The chain crosses the membrane as a helical span at residues 145-165 (LSAVMCVLLWALSLLLSILEG). Residues 166–184 (KFCGFLFSDGDSGWCQTFD) are Extracellular-facing. A helical transmembrane segment spans residues 185-205 (FITAAWLMFLFVVLCGSSLAL). At 206–228 (LVRILCGSRGLPLTRLYLTILLT) the chain is on the cytoplasmic side. The chain crosses the membrane as a helical span at residues 229-249 (VLIFLLCGLPFGIQWFLILWI). At 250–264 (WKNSDVLFCHIHPVS) the chain is on the extracellular side. The chain crosses the membrane as a helical span at residues 265–285 (VVLSSFNSSANPIIYFFVGSF). Over 286 to 330 (RKQWRLRQPVLKLALQRALQDTAEVDHSEGCFSQGTLEMSGSSLV) the chain is Cytoplasmic.

This sequence belongs to the G-protein coupled receptor 1 family. Mas subfamily.

The protein resides in the cell membrane. Its function is as follows. Mast cell-specific receptor for basic secretagogues, i.e. cationic amphiphilic drugs, as well as endo- or exogenous peptides, consisting of a basic head group and a hydrophobic core. Recognizes and binds small molecules containing a cyclized tetrahydroisoquinoline (THIQ), such as non-steroidal neuromuscular blocking drugs (NMBDs), including tubocurarine and atracurium. In response to these compounds, mediates pseudo-allergic reactions characterized by histamine release, inflammation and airway contraction. This is Mas-related G-protein coupled receptor member X2 (MRGPRX2) from Trachypithecus francoisi (Francois' leaf monkey).